Consider the following 235-residue polypeptide: 7-cyano-7-deazaguanine synthase (235 aa).

12-22 (FSGGQDSTTCL) serves as a coordination point for ATP. Residues Cys200, Cys215, Cys218, and Cys221 each coordinate Zn(2+).

Belongs to the QueC family. The cofactor is Zn(2+).

It catalyses the reaction 7-carboxy-7-deazaguanine + NH4(+) + ATP = 7-cyano-7-deazaguanine + ADP + phosphate + H2O + H(+). The protein operates within purine metabolism; 7-cyano-7-deazaguanine biosynthesis. Its function is as follows. Catalyzes the ATP-dependent conversion of 7-carboxy-7-deazaguanine (CDG) to 7-cyano-7-deazaguanine (preQ(0)). The chain is 7-cyano-7-deazaguanine synthase from Leptothrix cholodnii (strain ATCC 51168 / LMG 8142 / SP-6) (Leptothrix discophora (strain SP-6)).